Consider the following 100-residue polypeptide: NADH-quinone oxidoreductase subunit K (100 aa).

Helical transmembrane passes span 4-24, 29-49, and 60-80; these read TSYY…GVLL, IVVF…LVAF, and VIVF…LALL.

The protein belongs to the complex I subunit 4L family. In terms of assembly, NDH-1 is composed of 14 different subunits. Subunits NuoA, H, J, K, L, M, N constitute the membrane sector of the complex.

The protein localises to the cell membrane. The catalysed reaction is a quinone + NADH + 5 H(+)(in) = a quinol + NAD(+) + 4 H(+)(out). NDH-1 shuttles electrons from NADH, via FMN and iron-sulfur (Fe-S) centers, to quinones in the respiratory chain. The immediate electron acceptor for the enzyme in this species is believed to be ubiquinone. Couples the redox reaction to proton translocation (for every two electrons transferred, four hydrogen ions are translocated across the cytoplasmic membrane), and thus conserves the redox energy in a proton gradient. The polypeptide is NADH-quinone oxidoreductase subunit K (Chloroflexus aurantiacus (strain ATCC 29366 / DSM 635 / J-10-fl)).